We begin with the raw amino-acid sequence, 603 residues long: Phosphoribosylformylglycinamidine synthase subunit PurL (603 aa).

The active site involves His32. Residues Tyr35 and Lys68 each contribute to the ATP site. Position 70 (Glu70) interacts with Mg(2+). Substrate contacts are provided by residues 71 to 74 and Arg93; that span reads SHNH. The Proton acceptor role is filled by His72. Asp94 lines the Mg(2+) pocket. Residues Asp107 and 136 to 139 each bind ATP; that span reads GELR. Residues Gly189 and Gln208 each contribute to the substrate site. Asp236 serves as a coordination point for Mg(2+). Residue 280 to 282 participates in substrate binding; sequence ESQ. Gly388, Lys429, Asn442, and Gly477 together coordinate ATP. Asn478 serves as a coordination point for Mg(2+). A substrate-binding site is contributed by Ser480. Residues Ser549 and His556 each contribute to the ATP site.

Belongs to the FGAMS family. As to quaternary structure, monomer. Part of the FGAM synthase complex composed of 1 PurL, 1 PurQ and 2 PurS subunits.

It localises to the cytoplasm. It carries out the reaction N(2)-formyl-N(1)-(5-phospho-beta-D-ribosyl)glycinamide + L-glutamine + ATP + H2O = 2-formamido-N(1)-(5-O-phospho-beta-D-ribosyl)acetamidine + L-glutamate + ADP + phosphate + H(+). The protein operates within purine metabolism; IMP biosynthesis via de novo pathway; 5-amino-1-(5-phospho-D-ribosyl)imidazole from N(2)-formyl-N(1)-(5-phospho-D-ribosyl)glycinamide: step 1/2. Its function is as follows. Part of the phosphoribosylformylglycinamidine synthase complex involved in the purines biosynthetic pathway. Catalyzes the ATP-dependent conversion of formylglycinamide ribonucleotide (FGAR) and glutamine to yield formylglycinamidine ribonucleotide (FGAM) and glutamate. The FGAM synthase complex is composed of three subunits. PurQ produces an ammonia molecule by converting glutamine to glutamate. PurL transfers the ammonia molecule to FGAR to form FGAM in an ATP-dependent manner. PurS interacts with PurQ and PurL and is thought to assist in the transfer of the ammonia molecule from PurQ to PurL. The sequence is that of Phosphoribosylformylglycinamidine synthase subunit PurL from Thermotoga maritima (strain ATCC 43589 / DSM 3109 / JCM 10099 / NBRC 100826 / MSB8).